The chain runs to 239 residues: Enolase-phosphatase E1 (239 aa).

Residues Asp13 and Glu15 each contribute to the Mg(2+) site. Residues Ser133–Ser134 and Lys170 contribute to the substrate site. Residue Asp196 coordinates Mg(2+).

This sequence belongs to the HAD-like hydrolase superfamily. MasA/MtnC family. In terms of assembly, monomer. Mg(2+) is required as a cofactor.

The protein localises to the cytoplasm. It localises to the nucleus. The enzyme catalyses 5-methylsulfanyl-2,3-dioxopentyl phosphate + H2O = 1,2-dihydroxy-5-(methylsulfanyl)pent-1-en-3-one + phosphate. It functions in the pathway amino-acid biosynthesis; L-methionine biosynthesis via salvage pathway; L-methionine from S-methyl-5-thio-alpha-D-ribose 1-phosphate: step 3/6. Its pathway is amino-acid biosynthesis; L-methionine biosynthesis via salvage pathway; L-methionine from S-methyl-5-thio-alpha-D-ribose 1-phosphate: step 4/6. Bifunctional enzyme that catalyzes the enolization of 2,3-diketo-5-methylthiopentyl-1-phosphate (DK-MTP-1-P) into the intermediate 2-hydroxy-3-keto-5-methylthiopentenyl-1-phosphate (HK-MTPenyl-1-P), which is then dephosphorylated to form the acireductone 1,2-dihydroxy-3-keto-5-methylthiopentene (DHK-MTPene). The sequence is that of Enolase-phosphatase E1 from Chaetomium globosum (strain ATCC 6205 / CBS 148.51 / DSM 1962 / NBRC 6347 / NRRL 1970) (Soil fungus).